The primary structure comprises 941 residues: Pre-mRNA-processing factor 6 (941 aa).

Residues 1 to 79 form a disordered region; the sequence is MNKKKKPFLG…DEDLNDTNYD (79 aa). The span at 39–65 shows a compositional bias: basic and acidic residues; that stretch reads DANDPVDDRHAPPGKRTVGDQMKKNQA. A compositionally biased stretch (acidic residues) spans 66–78; it reads ADDDDEDLNDTNY. Serine 143 is modified (phosphoserine). Phosphothreonine is present on residues threonine 180, threonine 266, and threonine 275. Serine 279 bears the Phosphoserine mark. 9 HAT repeats span residues 384 to 416, 418 to 444, 445 to 476, 554 to 586, 588 to 620, 622 to 654, 689 to 721, 723 to 755, and 855 to 887; these read TDIRAKKRVLRKALEHVPNSVRLWKAAVELEEP, DARIMLSRAVECCPTSVELWLALARLE, TYENARKVLNKARENIPTDRHIWITAAKLEEA, NALECARAIYAYALQVFPSKKSVWLRAAYFGKN, GTRESLEALLQRAVAHCPKAEVLWLMGAKSKWL, GDVPAARSILALAFQANPNSEEIWLAAVKLESE, DNIRAAQDLCEEALRHYEDFPKLWMMKGQIEEQ, EMMEKAREAYNQGLKKCPHSTPLWLLLSRLEEK, and RKITKAREWFHRTVKIDSDLGDAWAFFYKFELQ.

As to quaternary structure, identified in the spliceosome B complex. Identified in the spliceosome C complex. Associates with the U5 snRNP particle. Component of the U4/U6-U5 tri-snRNP complex composed of the U4, U6 and U5 snRNAs and at least PRPF3, PRPF4, PRPF6, PRPF8, PRPF31, SNRNP200, TXNL4A, SNRNP40, DDX23, CD2BP2, PPIH, SNU13, EFTUD2, SART1 and USP39, LSm proteins LSm2-8 and Sm proteins. Interacts with ARAF1. Interacts with AR and NR3C1, but not ESR1, independently of the presence of hormones. Interacts with USH1G. Phosphorylated by PRP4K during spliceosome assembly.

The protein resides in the nucleus. The protein localises to the nucleoplasm. It localises to the nucleus speckle. In terms of biological role, involved in pre-mRNA splicing as component of the U4/U6-U5 tri-snRNP complex, one of the building blocks of the spliceosome. Enhances dihydrotestosterone-induced transactivation activity of AR, as well as dexamethasone-induced transactivation activity of NR3C1, but does not affect estrogen-induced transactivation. This Pongo abelii (Sumatran orangutan) protein is Pre-mRNA-processing factor 6 (PRPF6).